Reading from the N-terminus, the 200-residue chain is NADH-quinone oxidoreductase subunit C (200 aa).

This sequence belongs to the complex I 30 kDa subunit family. NDH-1 is composed of 14 different subunits. Subunits NuoB, C, D, E, F, and G constitute the peripheral sector of the complex.

It localises to the cell inner membrane. The catalysed reaction is a quinone + NADH + 5 H(+)(in) = a quinol + NAD(+) + 4 H(+)(out). Its function is as follows. NDH-1 shuttles electrons from NADH, via FMN and iron-sulfur (Fe-S) centers, to quinones in the respiratory chain. The immediate electron acceptor for the enzyme in this species is believed to be ubiquinone. Couples the redox reaction to proton translocation (for every two electrons transferred, four hydrogen ions are translocated across the cytoplasmic membrane), and thus conserves the redox energy in a proton gradient. The chain is NADH-quinone oxidoreductase subunit C from Burkholderia mallei (strain NCTC 10247).